A 229-amino-acid polypeptide reads, in one-letter code: Large ribosomal subunit protein uL1 (229 aa).

The protein belongs to the universal ribosomal protein uL1 family. Part of the 50S ribosomal subunit.

In terms of biological role, binds directly to 23S rRNA. The L1 stalk is quite mobile in the ribosome, and is involved in E site tRNA release. Functionally, protein L1 is also a translational repressor protein, it controls the translation of the L11 operon by binding to its mRNA. The protein is Large ribosomal subunit protein uL1 of Rhodopseudomonas palustris (strain HaA2).